The chain runs to 205 residues: Large ribosomal subunit protein uL18 (205 aa).

Belongs to the universal ribosomal protein uL18 family. In terms of assembly, part of the 50S ribosomal subunit. Contacts the 5S and 23S rRNAs.

Its function is as follows. This is one of the proteins that bind and probably mediate the attachment of the 5S RNA into the large ribosomal subunit, where it forms part of the central protuberance. This Pyrobaculum neutrophilum (strain DSM 2338 / JCM 9278 / NBRC 100436 / V24Sta) (Thermoproteus neutrophilus) protein is Large ribosomal subunit protein uL18.